The chain runs to 952 residues: Germ layers disorganized gldi-3 (952 aa).

An FHA domain is found at Lys39–Leu100. Disordered regions lie at residues Ile174–Thr220, Gly483–Val639, and Ala652–Cys866. Polar residues-rich tracts occupy residues Pro179–Gly195 and Asn202–Thr220. Over residues Glu523 to Asp537 the composition is skewed to acidic residues. Residues Pro553 to Val568 are compositionally biased toward basic and acidic residues. 2 stretches are compositionally biased toward polar residues: residues Arg569–Ala584 and Val600–Ser620. Over residues Ser662 to Val679 the composition is skewed to low complexity. Residues Thr685–Arg706 are compositionally biased toward basic and acidic residues. Positions Ser715–Glu724 are enriched in low complexity. Basic and acidic residues predominate over residues Ser725–Asp742. Residues Thr761–Arg772 are compositionally biased toward basic residues. The segment covering Val789–Glu800 has biased composition (acidic residues). Basic and acidic residues-rich tracts occupy residues Ile823–Asp832 and Pro856–Cys866.

The protein localises to the nucleus. Potential transcription factor that may play a role in the regulation of genes involved in cell cycle G1/S transition. May bind to regulatory elements of genes. The polypeptide is Germ layers disorganized gldi-3 (Caenorhabditis elegans).